The chain runs to 448 residues: Deoxyguanosinetriphosphate triphosphohydrolase-like protein (448 aa).

In terms of domain architecture, HD spans 67-260; it reads RLTHSLEVSQ…MELADDIAYG (194 aa).

This sequence belongs to the dGTPase family. Type 2 subfamily.

In Aliivibrio fischeri (strain MJ11) (Vibrio fischeri), this protein is Deoxyguanosinetriphosphate triphosphohydrolase-like protein.